Consider the following 156-residue polypeptide: SsrA-binding protein (156 aa).

Residues 135–156 form a disordered region; sequence HALRERQDRREADRAMSERKDR.

This sequence belongs to the SmpB family.

The protein resides in the cytoplasm. In terms of biological role, required for rescue of stalled ribosomes mediated by trans-translation. Binds to transfer-messenger RNA (tmRNA), required for stable association of tmRNA with ribosomes. tmRNA and SmpB together mimic tRNA shape, replacing the anticodon stem-loop with SmpB. tmRNA is encoded by the ssrA gene; the 2 termini fold to resemble tRNA(Ala) and it encodes a 'tag peptide', a short internal open reading frame. During trans-translation Ala-aminoacylated tmRNA acts like a tRNA, entering the A-site of stalled ribosomes, displacing the stalled mRNA. The ribosome then switches to translate the ORF on the tmRNA; the nascent peptide is terminated with the 'tag peptide' encoded by the tmRNA and targeted for degradation. The ribosome is freed to recommence translation, which seems to be the essential function of trans-translation. The protein is SsrA-binding protein of Kineococcus radiotolerans (strain ATCC BAA-149 / DSM 14245 / SRS30216).